A 220-amino-acid chain; its full sequence is IQ domain-containing protein F3 (220 aa).

The span at 1–22 (MELDQDQKVETPEAAENGKDEM) shows a compositional bias: basic and acidic residues. Positions 1–81 (MELDQDQKVE…KQIQDEKTGI (81 aa)) are disordered. Positions 23–50 (QLEEQTQDEDTTETETETETETEAEAEG) are enriched in acidic residues. Positions 69-93 (QAEKQIQDEKTGIKEADRAIQEQTQ) form a coiled coil. The IQ domain maps to 146 to 175 (AELAGVKIQAWWRGTLVRRTLLLAILSAWT).

The sequence is that of IQ domain-containing protein F3 (Iqcf3) from Rattus norvegicus (Rat).